The primary structure comprises 963 residues: Importin-13 (963 aa).

20 HEAT repeats span residues 24–54 (ENVEKALHQLYYDPNIDNKNLAQKWLMQAQV), 56–88 (PQAWHFSWQLLQPDKVPEIQYFGASALHIKISR), 95–135 (TDQY…LSMM), 142–179 (AVADMVRLFQAEDSPVDSQGRCLALLELLTVLPEEFQT), 194–231 (LAVECGTVFPLLEQLLQQPSSPSCVRQKVLKCFSSWVQ), 236–268 (LQDCEALIQAAFAALQDSELFDSSVEAIVNAIS), 276–325 (VNTL…ALLD), 330–372 (WQSF…DDIL), 375–438 (EAEK…YEML), 440–476 (AELLSNLYDKLGRLLTSSEEPYSWQHTEALLYGFQSI), 487–522 (VVPGLIGLIPRISISNVQLADTVMFTIGALSEWLAD), 524–558 (PVMINSVLPLVLHALGNPELSVSSVSTLKKICREC), 562–600 (LPPYAANIVAVSQDVLMKQIHKTSQCMWLMQALGFLLSA), 603–648 (VEEI…SNLF), 676–716 (PVVV…VKTL), 720–754 (FAPMVPQLCEMLGRMYSTVPQASALDLTRQLVHIF), 761–803 (FPPI…ALKR), 815–845 (VKAVFQCAVLALKFPEAPTVKASCGFFTELL), 860–893 (EDGRMLLIAVLEAIGGQASRSLMDCFADILFALN), and 897–931 (FSLLSMWIKEALQPPGFPSARLSPEQKDTFSQQIL). The 67-residue stretch at 45–111 (AQKWLMQAQV…KAQLFTQITR (67 aa)) folds into the Importin N-terminal domain.

This sequence belongs to the importin beta family. As to quaternary structure, interacts with UBC9, RAN, RBM8A, eIF-1A and PAX6.

It localises to the cytoplasm. Its subcellular location is the nucleus. In terms of biological role, functions in nuclear protein import as nuclear transport receptor. Serves as receptor for nuclear localization signals (NLS) in cargo substrates. Is thought to mediate docking of the importin/substrate complex to the nuclear pore complex (NPC) through binding to nucleoporin and the complex is subsequently translocated through the pore by an energy requiring, Ran-dependent mechanism. At the nucleoplasmic side of the NPC, Ran binds to the importin, the importin/substrate complex dissociates and importin is re-exported from the nucleus to the cytoplasm where GTP hydrolysis releases Ran. The directionality of nuclear import is thought to be conferred by an asymmetric distribution of the GTP- and GDP-bound forms of Ran between the cytoplasm and nucleus. Mediates the nuclear import of UBC9, the RBM8A/MAGOH complex, PAX6 and probably other members of the paired homeobox family. Also mediates nuclear export of eIF-1A, and the cytoplasmic release of eIF-1A is triggered by the loading of import substrates onto IPO13. This is Importin-13 (Ipo13) from Mus musculus (Mouse).